The sequence spans 511 residues: Glucans biosynthesis protein G (511 aa).

The first 22 residues, 1 to 22, serve as a signal peptide directing secretion; sequence MMKMRWLSAAVMLTLYTSSSWA.

This sequence belongs to the OpgD/OpgG family.

The protein resides in the periplasm. Its pathway is glycan metabolism; osmoregulated periplasmic glucan (OPG) biosynthesis. Functionally, involved in the biosynthesis of osmoregulated periplasmic glucans (OPGs). This Shigella boydii serotype 4 (strain Sb227) protein is Glucans biosynthesis protein G.